Consider the following 398-residue polypeptide: Phosphoglycerate kinase (398 aa).

Residues 20–22 (DFN), arginine 35, 58–61 (HLGK), arginine 118, and arginine 155 each bind substrate. ATP is bound by residues lysine 208, glycine 296, glutamate 327, and 354–357 (GGDS).

The protein belongs to the phosphoglycerate kinase family. In terms of assembly, monomer.

The protein localises to the cytoplasm. It catalyses the reaction (2R)-3-phosphoglycerate + ATP = (2R)-3-phospho-glyceroyl phosphate + ADP. Its pathway is carbohydrate degradation; glycolysis; pyruvate from D-glyceraldehyde 3-phosphate: step 2/5. This Fusobacterium nucleatum subsp. nucleatum (strain ATCC 25586 / DSM 15643 / BCRC 10681 / CIP 101130 / JCM 8532 / KCTC 2640 / LMG 13131 / VPI 4355) protein is Phosphoglycerate kinase.